The sequence spans 255 residues: Tail completion protein p143 (255 aa).

It localises to the virion. Functionally, putative role in tail stability. This Escherichia phage T5 (Enterobacteria phage T5) protein is Tail completion protein p143.